A 436-amino-acid polypeptide reads, in one-letter code: Serine--tRNA ligase (436 aa).

A compositionally biased stretch (basic and acidic residues) spans 43–55; sequence TKSEQLKQKRNEV. Positions 43 to 69 are disordered; it reads TKSEQLKQKRNEVSDQIAQAKRNKEDA. 237 to 239 is an L-serine binding site; sequence TAE. 268–270 contacts ATP; that stretch reads RSE. Position 291 (Glu291) interacts with L-serine. An ATP-binding site is contributed by 355 to 358; sequence EISS. An L-serine-binding site is contributed by Ser390.

The protein belongs to the class-II aminoacyl-tRNA synthetase family. Type-1 seryl-tRNA synthetase subfamily. In terms of assembly, homodimer. The tRNA molecule binds across the dimer.

The protein localises to the cytoplasm. It catalyses the reaction tRNA(Ser) + L-serine + ATP = L-seryl-tRNA(Ser) + AMP + diphosphate + H(+). The enzyme catalyses tRNA(Sec) + L-serine + ATP = L-seryl-tRNA(Sec) + AMP + diphosphate + H(+). It functions in the pathway aminoacyl-tRNA biosynthesis; selenocysteinyl-tRNA(Sec) biosynthesis; L-seryl-tRNA(Sec) from L-serine and tRNA(Sec): step 1/1. In terms of biological role, catalyzes the attachment of serine to tRNA(Ser). Is also able to aminoacylate tRNA(Sec) with serine, to form the misacylated tRNA L-seryl-tRNA(Sec), which will be further converted into selenocysteinyl-tRNA(Sec). In Lactobacillus gasseri (strain ATCC 33323 / DSM 20243 / BCRC 14619 / CIP 102991 / JCM 1131 / KCTC 3163 / NCIMB 11718 / NCTC 13722 / AM63), this protein is Serine--tRNA ligase.